A 79-amino-acid polypeptide reads, in one-letter code: Cyclin-dependent kinases regulatory subunit 2 (79 aa).

At Lys4 the chain carries N6-acetyllysine.

It belongs to the CKS family. As to quaternary structure, forms a homohexamer that can probably bind six kinase subunits.

Binds to the catalytic subunit of the cyclin dependent kinases and is essential for their biological function. The polypeptide is Cyclin-dependent kinases regulatory subunit 2 (CKS2) (Bos taurus (Bovine)).